A 186-amino-acid polypeptide reads, in one-letter code: PR-toxin biosynthesis cluster protein 7 (186 aa).

A helical membrane pass occupies residues 24–43 (LGEVTTGGVTPRGTFIFCPI).

It is found in the membrane. Its pathway is sesquiterpene biosynthesis. Its function is as follows. Part of the gene cluster that mediates the biosynthesis of PR-toxin, a bicyclic sesquiterpene belonging to the eremophilane class and acting as a mycotoxin. The first step of the pathway is catalyzed by the aristolochene synthase which performs the cyclization of trans,trans-farnesyl diphosphate (FPP) to the bicyclic sesquiterpene aristolochene. Following the formation of aristolochene, the non-oxygenated aristolochene is converted to the trioxygenated intermediate eremofortin B, via 7-epi-neopetasone. This conversion appears to involve three enzymes, a hydroxysterol oxidase-like enzyme, the quinone-oxidase prx3 that forms the quinone-type-structure in the bicyclic nucleus of aristolochene with the C8-oxo group and the C-3 hydroxyl group, and the P450 monooxygenase ORF6 that introduces the epoxide at the double bond between carbons 1 and 2. No monoxy or dioxy-intermediates have been reported to be released to the broth, so these three early oxidative reactions may be coupled together. Eremofortin B is further oxidized by another P450 monooxygenase, that introduces a second epoxide between carbons 7 and 11 prior to acetylation to eremofortin A by the acetyltransferase ORF8. The second epoxidation may be performed by a second P450 monooxygenase. After the acetylation step, eremofortin A is converted to eremofortin C and then to PR-toxin. First the conversion of eremofortin A to eremofortin C proceeds by oxidation of the side chain of the molecule at C-12 and is catalyzed by the short-chain oxidoreductase prx1. The cytochrome P450 monooxygenase ORF6 is probably also involved in this step. The primary alcohol formed at C-12 is finally oxidized by the short-chain alcohol dehydrogenase prx4 that forms PR-toxin. The polypeptide is PR-toxin biosynthesis cluster protein 7 (Penicillium roqueforti (strain FM164)).